A 678-amino-acid chain; its full sequence is Serine/threonine-protein kinase mph1 (678 aa).

2 disordered regions span residues 39–93 (KNDT…NSAL) and 114–209 (LPST…SNSV). Polar residues-rich tracts occupy residues 41-66 (DTFSSKSSHSDGTVTGDTLRRQSSGA) and 114-125 (LPSTNASHSEVS). Residues 316–607 (FIKLGVVGKG…LVHPFLNPLP (292 aa)) form the Protein kinase domain. ATP contacts are provided by residues 322–330 (VGKGGSSMV) and Lys345. The active-site Proton acceptor is Asp442.

It belongs to the protein kinase superfamily. Ser/Thr protein kinase family.

It catalyses the reaction L-seryl-[protein] + ATP = O-phospho-L-seryl-[protein] + ADP + H(+). The catalysed reaction is L-threonyl-[protein] + ATP = O-phospho-L-threonyl-[protein] + ADP + H(+). It carries out the reaction L-tyrosyl-[protein] + ATP = O-phospho-L-tyrosyl-[protein] + ADP + H(+). Its function is as follows. Involved in mitotic spindle assembly checkpoint signaling, a process that delays anaphase until chromosomes are bioriented on the spindle, and in the repair of incorrect mitotic kinetochore-spindle microtubule attachments. Phosphorylates spc7/knl1 on MELT motifs; phosphorylation is required for recruitment of the BUB1-BUB3 complex to kinetochores. This is Serine/threonine-protein kinase mph1 from Schizosaccharomyces pombe (strain 972 / ATCC 24843) (Fission yeast).